We begin with the raw amino-acid sequence, 601 residues long: Probable translation initiation factor IF-2 (601 aa).

A tr-type G domain is found at 14–229 (LRTPIVAVLG…VMMGLSQRYM (216 aa)). The segment at 23 to 30 (GHVDHGKT) is G1. 23-30 (GHVDHGKT) is a binding site for GTP. The tract at residues 48-52 (AITQH) is G2. The tract at residues 85–88 (DTPG) is G3. GTP contacts are provided by residues 85-89 (DTPGH) and 139-142 (NKID). The interval 139–142 (NKID) is G4. Positions 207 to 209 (SAE) are G5.

The protein belongs to the TRAFAC class translation factor GTPase superfamily. Classic translation factor GTPase family. IF-2 subfamily.

Function in general translation initiation by promoting the binding of the formylmethionine-tRNA to ribosomes. Seems to function along with eIF-2. This is Probable translation initiation factor IF-2 from Haloarcula marismortui (strain ATCC 43049 / DSM 3752 / JCM 8966 / VKM B-1809) (Halobacterium marismortui).